Here is a 722-residue protein sequence, read N- to C-terminus: BTB/POZ domain-containing protein 9 (722 aa).

Residues 46–112 enclose the BTB domain; sequence ADVEFIVEEE…IYSGTLLLST (67 aa). The region spanning 151–247 is the BACK domain; it reads CMILDAARLY…MNLEHLLQVV (97 aa). Positions 565 to 593 form a coiled coil; it reads QDKNYLKKIADMEKEREKREKEKKTAKTD. Residues 577–594 show a composition bias toward basic and acidic residues; it reads EKEREKREKEKKTAKTDD. Disordered regions lie at residues 577–626 and 640–722; these read EKER…VLRS and PLTP…RETL. Residues 597–606 are compositionally biased toward polar residues; it reads IASTSGSSLA. Low complexity predominate over residues 607 to 626; sequence SGHAESPSTSSSSSQSVLRS. Over residues 641–658 the composition is skewed to pro residues; that stretch reads LTPPALSPPGTPALPAPL. Polar residues predominate over residues 670–679; sequence EQNQPSNISA. Positions 686–704 are enriched in low complexity; sequence SPSSRSNPSPSLSRSRSQS.

As to expression, detected in the brain (at protein level).

It is found in the cytoplasm. Its function is as follows. Essential for the homeostatic regulation of sleep and motor activity, by depressing hyperactivity and wakefulness. May function, at least in part, by ensuring dopamine biosynthesis. The protein is BTB/POZ domain-containing protein 9 of Drosophila melanogaster (Fruit fly).